Consider the following 215-residue polypeptide: Histone H1.1 (215 aa).

The interval 1 to 43 (MSETVPPAPAASAAPEKPLAGKKAKKPAKAAAASKKKPAGPSV) is disordered. Position 2 is an N-acetylserine (Ser2). Residues Ser2 and Ser12 each carry the phosphoserine modification. Position 17 is an N6-acetyllysine (Lys17). The span at 20 to 38 (AGKKAKKPAKAAAASKKKP) shows a compositional bias: basic residues. Lys37 bears the N6-(beta-hydroxybutyryl)lysine mark. Residues 39-112 (AGPSVSELIV…GASGSFKLNK (74 aa)) form the H15 domain. Ser44 is modified (phosphoserine). Lys55 carries the N6-(beta-hydroxybutyryl)lysine modification. A Citrulline modification is found at Arg57. Position 67 is an N6-(beta-hydroxybutyryl)lysine (Lys67). Lys78 is modified (N6-acetyllysine). Position 88 is an N6-(beta-hydroxybutyryl)lysine (Lys88). At Lys93 the chain carries N6-(beta-hydroxybutyryl)lysine; alternate. At Lys93 the chain carries N6-acetyllysine; alternate. Positions 94-215 (GTLVQTKGTG…KPKKAAPKKK (122 aa)) are disordered. A Phosphoserine modification is found at Ser107. Lys109 bears the N6-(beta-hydroxybutyryl)lysine mark. Residues 122-147 (GASKVATKTKATGASKKLKKATGASK) are compositionally biased toward low complexity. Lys125 is modified (N6-acetyllysine). 2 stretches are compositionally biased toward basic residues: residues 148-181 (KSVKTPKKAKKPAATRKSSKNPKKPKTVKPKKVA) and 188-215 (KAVKPKAAKARVTKPKTAKPKKAAPKKK). Residue Thr204 is modified to Phosphothreonine.

The protein belongs to the histone H1/H5 family. As to quaternary structure, interacts with DFFB. H1 histones are progressively phosphorylated during the cell cycle, becoming maximally phosphorylated during late G2 phase and M phase, and being dephosphorylated sharply thereafter. In terms of processing, citrullination at Arg-57 (H1R54ci) by PADI4 takes place within the DNA-binding site of H1 and results in its displacement from chromatin and global chromatin decondensation, thereby promoting pluripotency and stem cell maintenance.

It localises to the nucleus. The protein localises to the chromosome. In terms of biological role, histone H1 protein binds to linker DNA between nucleosomes forming the macromolecular structure known as the chromatin fiber. Histones H1 are necessary for the condensation of nucleosome chains into higher-order structured fibers. Also acts as a regulator of individual gene transcription through chromatin remodeling, nucleosome spacing and DNA methylation. This chain is Histone H1.1, found in Homo sapiens (Human).